Reading from the N-terminus, the 421-residue chain is MQLLNFGLLLLPFVAGDLAPQPEPLLAGPSDVVPGQYIVTLKEGLTSAQIRDHKKWVSSVHRANLEGFAAGASGVETEGIMKHFHIHDLNMYSGGFDEKTVEDLSRNPYVKSVHPDQHVYLAKTVTQRQARWGLGYMSSKGKPVPLHSTLVDYSYDDKAGEGVWAYVLDTGINVNHVEFEGRAILGHNAIPNKPHTDEFGHGTYVAGIIAGKTYGVAKKANVVSAKAFDTGSSTYNYILETYDWIVRNITDSNRKNKAVINFSISGAKYQPFDDAVEKAFKAGIATVVAAGNDGKDAKNNTPASSPNAITVGAVRWENTRPSFSNYGKIVDIWAPGELIKSCWKGGNNATSTQSGTSAASPHVAGLVAYLMSTENLPSPSAVTARVLNLTIPNLVKDAKDSPNRVVYNGIQERKFTLPKYF.

The N-terminal stretch at 1 to 16 (MQLLNFGLLLLPFVAG) is a signal peptide. A propeptide spanning residues 17-122 (DLAPQPEPLL…VHPDQHVYLA (106 aa)) is cleaved from the precursor. Residues 36-122 (QYIVTLKEGL…VHPDQHVYLA (87 aa)) form the Inhibitor I9 domain. The Peptidase S8 domain maps to 131–421 (RWGLGYMSSK…ERKFTLPKYF (291 aa)). Catalysis depends on charge relay system residues D169 and H201. Residues N248, N261, and N348 are each glycosylated (N-linked (GlcNAc...) asparagine). S357 (charge relay system) is an active-site residue. The N-linked (GlcNAc...) asparagine glycan is linked to N388.

Belongs to the peptidase S8 family.

It localises to the secreted. Its function is as follows. Secreted subtilisin-like serine protease with keratinolytic activity that contributes to pathogenicity. This Trichophyton tonsurans (Scalp ringworm fungus) protein is Subtilisin-like protease 2 (SUB2).